We begin with the raw amino-acid sequence, 138 residues long: Basic phospholipase A2 PL-X' (138 aa).

Positions 1–16 (MRTLWIMAVLLVGVEG) are cleaved as a signal peptide. Cystine bridges form between Cys-42/Cys-131, Cys-44/Cys-60, Cys-59/Cys-111, Cys-65/Cys-138, Cys-66/Cys-104, Cys-73/Cys-97, and Cys-91/Cys-102. Residues Tyr-43, Gly-45, and Gly-47 each contribute to the Ca(2+) site. Residue His-63 is part of the active site. Asp-64 is a Ca(2+) binding site. Residue Asp-105 is part of the active site.

This sequence belongs to the phospholipase A2 family. Group II subfamily. D49 sub-subfamily. The cofactor is Ca(2+). In terms of tissue distribution, expressed by the venom gland.

The protein localises to the secreted. It carries out the reaction a 1,2-diacyl-sn-glycero-3-phosphocholine + H2O = a 1-acyl-sn-glycero-3-phosphocholine + a fatty acid + H(+). PLA2 catalyzes the calcium-dependent hydrolysis of the 2-acyl groups in 3-sn-phosphoglycerides. The polypeptide is Basic phospholipase A2 PL-X' (Protobothrops flavoviridis (Habu)).